We begin with the raw amino-acid sequence, 579 residues long: Arginine--tRNA ligase (579 aa).

Positions 127 to 137 match the 'HIGH' region motif; sequence PNLAKEMHVGH.

Belongs to the class-I aminoacyl-tRNA synthetase family. As to quaternary structure, monomer.

The protein localises to the cytoplasm. The catalysed reaction is tRNA(Arg) + L-arginine + ATP = L-arginyl-tRNA(Arg) + AMP + diphosphate. This is Arginine--tRNA ligase from Stutzerimonas stutzeri (strain A1501) (Pseudomonas stutzeri).